The following is a 699-amino-acid chain: D-(-)-3-hydroxybutyrate oligomer hydrolase (699 aa).

An N-terminal signal peptide occupies residues 1 to 33 (MTAIRGGSRRAPGLALALLGGVLLGACHGDENA). The Charge relay system role is filled by Ser-311.

This sequence belongs to the D-(-)-3-hydroxybutyrate oligomer hydrolase family.

It is found in the secreted. It carries out the reaction (3R)-hydroxybutanoate dimer + H2O = 2 (R)-3-hydroxybutanoate + H(+). The protein operates within lipid metabolism; butanoate metabolism. Its function is as follows. Participates in the degradation of poly-3-hydroxybutyrate (PHB). It works downstream of poly(3-hydroxybutyrate) depolymerase, hydrolyzing D(-)-3-hydroxybutyrate oligomers of various length (3HB-oligomers) into 3HB-monomers. This chain is D-(-)-3-hydroxybutyrate oligomer hydrolase, found in Burkholderia mallei (strain NCTC 10247).